A 172-amino-acid chain; its full sequence is Crossover junction endodeoxyribonuclease RuvC (172 aa).

Active-site residues include Asp-7, Glu-67, and Asp-140. 3 residues coordinate Mg(2+): Asp-7, Glu-67, and Asp-140.

This sequence belongs to the RuvC family. Homodimer which binds Holliday junction (HJ) DNA. The HJ becomes 2-fold symmetrical on binding to RuvC with unstacked arms; it has a different conformation from HJ DNA in complex with RuvA. In the full resolvosome a probable DNA-RuvA(4)-RuvB(12)-RuvC(2) complex forms which resolves the HJ. Requires Mg(2+) as cofactor.

Its subcellular location is the cytoplasm. It carries out the reaction Endonucleolytic cleavage at a junction such as a reciprocal single-stranded crossover between two homologous DNA duplexes (Holliday junction).. Functionally, the RuvA-RuvB-RuvC complex processes Holliday junction (HJ) DNA during genetic recombination and DNA repair. Endonuclease that resolves HJ intermediates. Cleaves cruciform DNA by making single-stranded nicks across the HJ at symmetrical positions within the homologous arms, yielding a 5'-phosphate and a 3'-hydroxyl group; requires a central core of homology in the junction. The consensus cleavage sequence is 5'-(A/T)TT(C/G)-3'. Cleavage occurs on the 3'-side of the TT dinucleotide at the point of strand exchange. HJ branch migration catalyzed by RuvA-RuvB allows RuvC to scan DNA until it finds its consensus sequence, where it cleaves and resolves the cruciform DNA. The protein is Crossover junction endodeoxyribonuclease RuvC of Syntrophomonas wolfei subsp. wolfei (strain DSM 2245B / Goettingen).